The chain runs to 596 residues: Zinc finger CCCH domain-containing protein 64 (596 aa).

2 disordered regions span residues 243-263 (LSPTPTSTMSPAELSAKPPKT) and 272-291 (DGAAESKKRPNDSDSDSQYW). 2 consecutive C3H1-type zinc fingers follow at residues 303-331 (SQGEKLCFKFVCSGSCPRGEDCHFQHNAE) and 335-363 (QCRRGVCLDLIIKGKCEKGPECSYKHEFQ).

The sequence is that of Zinc finger CCCH domain-containing protein 64 from Arabidopsis thaliana (Mouse-ear cress).